We begin with the raw amino-acid sequence, 152 residues long: ESAT-6 secretion machinery protein EssA (152 aa).

The Cytoplasmic segment spans residues 1-114; sequence MLMNSVIALT…PYIQNKQEKK (114 aa). The segment at 62–83 is disordered; sequence ERQQQIKNDMFQNQASHSTRLN. Residues 66–80 are compositionally biased toward polar residues; that stretch reads QIKNDMFQNQASHST. The chain crosses the membrane as a helical span at residues 115–135; that stretch reads IFPYILMSVGAFLTLGFVIFS. Residues 136 to 152 lie on the Extracellular side of the membrane; sequence IHKGRRTKNESARKSNI.

It belongs to the EssA family.

The protein resides in the cell membrane. Functionally, component of the ESAT-6 secretion system (Ess). Required for the secretion of EsxA and EsxB. The polypeptide is ESAT-6 secretion machinery protein EssA (Staphylococcus aureus (strain COL)).